Here is a 435-residue protein sequence, read N- to C-terminus: ATP-dependent protease ATPase subunit HslU (435 aa).

ATP contacts are provided by residues I18, 60 to 65 (GVGKTE), D248, E313, and R385.

The protein belongs to the ClpX chaperone family. HslU subfamily. As to quaternary structure, a double ring-shaped homohexamer of HslV is capped on each side by a ring-shaped HslU homohexamer. The assembly of the HslU/HslV complex is dependent on binding of ATP.

It is found in the cytoplasm. In terms of biological role, ATPase subunit of a proteasome-like degradation complex; this subunit has chaperone activity. The binding of ATP and its subsequent hydrolysis by HslU are essential for unfolding of protein substrates subsequently hydrolyzed by HslV. HslU recognizes the N-terminal part of its protein substrates and unfolds these before they are guided to HslV for hydrolysis. The chain is ATP-dependent protease ATPase subunit HslU from Ruegeria pomeroyi (strain ATCC 700808 / DSM 15171 / DSS-3) (Silicibacter pomeroyi).